A 208-amino-acid polypeptide reads, in one-letter code: Type 4 adapter protein LvgA (208 aa).

The T4BSS is a complex nanomachine composed of several subcomplexes. This subunit is part of the Type IV Coupling Complex (T4CC), a subcomplex composed of the DotLMNYZ core and the IcmSW-LvgA adapter subunits, linked by the C-terminal tail of DotL. Interacts with DotL, IcmS and IcmW. Interacts with various effector proteins, including VpdB, SetA, PieA and SidH.

The protein localises to the cytoplasm. In terms of biological role, component of the Dot/Icm type IVB secretion system (T4BSS), which is used to inject bacterial effector proteins into eukaryotic host cells. Part of a subcomplex which recruits effector proteins and delivers them to the core transmembrane subcomplex. Is a critical subunit for binding a subset of effector proteins. Recognizes more than one type of binding motif. May be a critical factor that confers host specificity. This chain is Type 4 adapter protein LvgA, found in Legionella pneumophila subsp. pneumophila (strain Philadelphia 1 / ATCC 33152 / DSM 7513).